Here is a 200-residue protein sequence, read N- to C-terminus: Synaptobrevin homolog YKT6 (200 aa).

Residues Gly7–Ile129 enclose the Longin domain. Residues Ala140–Met200 form the v-SNARE coiled-coil homology domain. Residue Thr158 is modified to Phosphothreonine. Cys196 is lipidated: S-palmitoyl cysteine. Cys197 is subject to Cysteine methyl ester. Cys197 carries S-farnesyl cysteine lipidation. Residues Ile198–Met200 constitute a propeptide, removed in mature form.

It belongs to the synaptobrevin family.

Its subcellular location is the cell membrane. This chain is Synaptobrevin homolog YKT6 (YKT6), found in Saccharomyces cerevisiae (strain ATCC 204508 / S288c) (Baker's yeast).